Reading from the N-terminus, the 150-residue chain is MQVILLEKVVNLGNLGEIVKVKDGYARNFLIPQRKARRATTAAVAEFEVKRAELEKIAAEKLAASQAQGEKLTGQTVQISQKSGVDGRLFGSVTNADIAVALTKQGFAVEKAQVRMPTGPLKVTGDHTVAVALHTDVVIEVTITIVGEHA.

This sequence belongs to the bacterial ribosomal protein bL9 family.

Functionally, binds to the 23S rRNA. The polypeptide is Large ribosomal subunit protein bL9 (Herminiimonas arsenicoxydans).